The sequence spans 478 residues: Phosphoglycerate kinase 2, chloroplastic (478 aa).

A chloroplast-targeting transit peptide spans 1 to 74 (MASTAATAAL…GKGARGVITM (74 aa)). Ser-78 is modified (phosphoserine). Positions 96, 97, 99, 113, 135, 136, 138, 139, 194, 226, and 227 each coordinate (2R)-3-phosphoglycerate. Gly-272 contributes to the ADP binding site. Gly-272 contributes to the CDP binding site. The AMP site is built by Lys-274 and Lys-278. ATP is bound at residue Lys-278. Gly-296 serves as a coordination point for ADP. Residue Gly-296 coordinates CDP. 2 residues coordinate AMP: Gly-297 and Gly-369. 2 residues coordinate ATP: Gly-297 and Gly-369. 2 residues coordinate CDP: Gly-394 and Phe-399. Phe-399 provides a ligand contact to ADP. Glu-400 lines the AMP pocket. ATP is bound by residues Glu-400, Asp-431, and Ser-432. Asp-431 serves as a coordination point for Mg(2+).

Belongs to the phosphoglycerate kinase family. In terms of assembly, monomer. The cofactor is Mg(2+).

It localises to the plastid. It is found in the chloroplast. It carries out the reaction (2R)-3-phosphoglycerate + ATP = (2R)-3-phospho-glyceroyl phosphate + ADP. Its pathway is carbohydrate biosynthesis; Calvin cycle. This is Phosphoglycerate kinase 2, chloroplastic from Arabidopsis thaliana (Mouse-ear cress).